The chain runs to 198 residues: Na(+)-translocating NADH-quinone reductase subunit E (198 aa).

Transmembrane regions (helical) follow at residues 11-31, 39-59, 77-97, 110-130, 140-160, and 176-196; these read SIFI…FLAV, FGLG…NNLV, FLNF…LEMV, GIFL…SFMV, IVYG…LAGI, and LGIT…FSGV.

This sequence belongs to the NqrDE/RnfAE family. As to quaternary structure, composed of six subunits; NqrA, NqrB, NqrC, NqrD, NqrE and NqrF. Post-translationally, the N-terminus is blocked.

Its subcellular location is the cell inner membrane. The enzyme catalyses a ubiquinone + n Na(+)(in) + NADH + H(+) = a ubiquinol + n Na(+)(out) + NAD(+). This reaction is tightly coupled to the Na(+) pumping activity and specifically requires Na(+) for activity. Inhibited by korormicin and 2-N-heptyl-4-hydroxyquinoline N-oxide (HQNO). In terms of biological role, NQR complex catalyzes the reduction of ubiquinone-1 to ubiquinol by two successive reactions, coupled with the transport of Na(+) ions from the cytoplasm to the periplasm. NqrA to NqrE are probably involved in the second step, the conversion of ubisemiquinone to ubiquinol. In Vibrio alginolyticus, this protein is Na(+)-translocating NADH-quinone reductase subunit E.